Reading from the N-terminus, the 412-residue chain is Glucose-1-phosphate adenylyltransferase (412 aa).

Alpha-D-glucose 1-phosphate is bound by residues Y98, G163, 178–179, and S189; that span reads EK.

Belongs to the bacterial/plant glucose-1-phosphate adenylyltransferase family. Homotetramer.

The catalysed reaction is alpha-D-glucose 1-phosphate + ATP + H(+) = ADP-alpha-D-glucose + diphosphate. Its pathway is glycan biosynthesis; glycogen biosynthesis. Involved in the biosynthesis of ADP-glucose, a building block required for the elongation reactions to produce glycogen. Catalyzes the reaction between ATP and alpha-D-glucose 1-phosphate (G1P) to produce pyrophosphate and ADP-Glc. The polypeptide is Glucose-1-phosphate adenylyltransferase (Thermosipho melanesiensis (strain DSM 12029 / CIP 104789 / BI429)).